The primary structure comprises 296 residues: GTPase Era (296 aa).

Residues 3–170 (KSGFVTIVGR…KELMFKYIPE (168 aa)) enclose the Era-type G domain. The G1 stretch occupies residues 11–18 (GRPNVGKS). 11–18 (GRPNVGKS) contacts GTP. Residues 37–41 (QTTRN) are G2. Residues 58-61 (DTPG) are G3. GTP is bound by residues 58–62 (DTPGI) and 120–123 (NKID). Residues 120-123 (NKID) are G4. Positions 149–151 (ISA) are G5. Residues 201 to 278 (LSEEVPHGIA…YIRLWVKVKE (78 aa)) enclose the KH type-2 domain.

It belongs to the TRAFAC class TrmE-Era-EngA-EngB-Septin-like GTPase superfamily. Era GTPase family. As to quaternary structure, monomer.

The protein resides in the cytoplasm. Its subcellular location is the cell membrane. Functionally, an essential GTPase that binds both GDP and GTP, with rapid nucleotide exchange. Plays a role in 16S rRNA processing and 30S ribosomal subunit biogenesis and possibly also in cell cycle regulation and energy metabolism. The sequence is that of GTPase Era from Clostridium botulinum (strain Kyoto / Type A2).